The sequence spans 391 residues: Probable tRNA sulfurtransferase (391 aa).

Residues 60–167 (DETVAALQRV…NKAYVYSNTL (108 aa)) enclose the THUMP domain. Residues 184–185 (LL), 209–210 (YF), R266, G288, and Q297 each bind ATP.

The protein belongs to the ThiI family.

The protein localises to the cytoplasm. The enzyme catalyses [ThiI sulfur-carrier protein]-S-sulfanyl-L-cysteine + a uridine in tRNA + 2 reduced [2Fe-2S]-[ferredoxin] + ATP + H(+) = [ThiI sulfur-carrier protein]-L-cysteine + a 4-thiouridine in tRNA + 2 oxidized [2Fe-2S]-[ferredoxin] + AMP + diphosphate. It catalyses the reaction [ThiS sulfur-carrier protein]-C-terminal Gly-Gly-AMP + S-sulfanyl-L-cysteinyl-[cysteine desulfurase] + AH2 = [ThiS sulfur-carrier protein]-C-terminal-Gly-aminoethanethioate + L-cysteinyl-[cysteine desulfurase] + A + AMP + 2 H(+). Its pathway is cofactor biosynthesis; thiamine diphosphate biosynthesis. Its function is as follows. Catalyzes the ATP-dependent transfer of a sulfur to tRNA to produce 4-thiouridine in position 8 of tRNAs, which functions as a near-UV photosensor. Also catalyzes the transfer of sulfur to the sulfur carrier protein ThiS, forming ThiS-thiocarboxylate. This is a step in the synthesis of thiazole, in the thiamine biosynthesis pathway. The sulfur is donated as persulfide by IscS. This is Probable tRNA sulfurtransferase from Lachnoclostridium phytofermentans (strain ATCC 700394 / DSM 18823 / ISDg) (Clostridium phytofermentans).